The sequence spans 227 residues: MESFEKLEKLLSYSFKNKELLIEALSHPSLRQHHEYKDDKDYERLEFLGDAVLNLVITEILFRNFANYNEGNLAKIRSYLVCKETICMVGAKLTLKNYIIMTHGEEVAGGRDNLNNIENATEALIAAIYLDSNIETTHDIIEKLWAEFIKVQNLTDYDPKTALQEWAQASDHHLPIYRLIKREGASHSSTFTVLVKVKDYEQTGTGHAIKEAEKNAARSLLHRLKND.

Residues Phe-4–Asn-133 enclose the RNase III domain. Glu-46 contributes to the Mg(2+) binding site. Residue Asp-50 is part of the active site. Mg(2+)-binding residues include Asn-119 and Glu-122. Glu-122 is an active-site residue. In terms of domain architecture, DRBM spans Asp-158–Asn-226.

This sequence belongs to the ribonuclease III family. In terms of assembly, homodimer. It depends on Mg(2+) as a cofactor.

It localises to the cytoplasm. The enzyme catalyses Endonucleolytic cleavage to 5'-phosphomonoester.. Functionally, digests double-stranded RNA. Involved in the processing of primary rRNA transcript to yield the immediate precursors to the large and small rRNAs (23S and 16S). Processes some mRNAs, and tRNAs when they are encoded in the rRNA operon. Processes pre-crRNA and tracrRNA of type II CRISPR loci if present in the organism. The protein is Ribonuclease 3 of Rickettsia africae (strain ESF-5).